Consider the following 216-residue polypeptide: RNA pyrophosphohydrolase (216 aa).

The region spanning 6 to 149 (GFRPNVGIIL…KRDVYQLALT (144 aa)) is the Nudix hydrolase domain. The Nudix box motif lies at 38–59 (GGIKYGETPMQAMYRELHEETG). The disordered stretch occupies residues 159–188 (AQRTDKSRGPRAPRYPRVANGHAASEAPAA).

Belongs to the Nudix hydrolase family. RppH subfamily. A divalent metal cation is required as a cofactor.

Its function is as follows. Accelerates the degradation of transcripts by removing pyrophosphate from the 5'-end of triphosphorylated RNA, leading to a more labile monophosphorylated state that can stimulate subsequent ribonuclease cleavage. This chain is RNA pyrophosphohydrolase, found in Burkholderia mallei (strain NCTC 10247).